Here is a 138-residue protein sequence, read N- to C-terminus: Cystatin-11 (138 aa).

The first 26 residues, 1–26 (MMAEPWQALQLLLAILLTLMALPYQA), serve as a signal peptide directing secretion. 2 disulfide bridges follow: C94–C102 and C115–C135. N132 is a glycosylation site (N-linked (GlcNAc...) asparagine).

It belongs to the cystatin family. In terms of tissue distribution, detected in the epithelium and lumen of the epididymis, and in sperm (at protein level).

The protein resides in the secreted. Its function is as follows. Has antibacterial activity against the Gram-negative bacteria E.coli. May play a role in sperm maturation and fertilization. The sequence is that of Cystatin-11 (CST11) from Homo sapiens (Human).